Reading from the N-terminus, the 942-residue chain is Protein inturned (942 aa).

Disordered stretches follow at residues methionine 1–leucine 56 and leucine 128–valine 156. The segment covering serine 22–serine 32 has biased composition (acidic residues). Positions aspartate 33–aspartate 48 are enriched in low complexity. The span at serine 137–valine 156 shows a compositional bias: polar residues. Residues leucine 185 to asparagine 267 enclose the PDZ domain. Residues serine 674 and serine 678 each carry the phosphoserine modification. Residues lysine 707–aspartate 751 form a disordered region.

Belongs to the inturned family. In terms of assembly, component of the CPLANE (ciliogenesis and planar polarity effectors) complex, composed of INTU, FUZ and WDPCP. Interacts with CPLANE1. Interacts with NPHP4 and DAAM1; INTU is mediating the interaction between NPHP4 and DAAM1. As to expression, widely expressed in E8.5 and E9.5 wild type embryos. Present in various adult organs (at protein level).

The protein localises to the cytoplasm. It is found in the cell surface. It localises to the cytoskeleton. The protein resides in the cilium basal body. Its subcellular location is the microtubule organizing center. The protein localises to the centrosome. It is found in the centriole. Its function is as follows. Plays a key role in ciliogenesis and embryonic development. Regulator of cilia formation by controlling the organization of the apical actin cytoskeleton and the positioning of the basal bodies at the apical cell surface, which in turn is essential for the normal orientation of elongating ciliary microtubules. Plays a key role in definition of cell polarity via its role in ciliogenesis but not via conversion extension. Has an indirect effect on hedgehog signaling. Proposed to function as core component of the CPLANE (ciliogenesis and planar polarity effectors) complex involved in the recruitment of peripheral IFT-A proteins to basal bodies. Required for recruitment of CPLANE2 to the mother centriole. Binds phosphatidylinositol 3-phosphate with highest affinity, followed by phosphatidylinositol 4-phosphate and phosphatidylinositol 5-phosphate. The sequence is that of Protein inturned (Intu) from Mus musculus (Mouse).